The chain runs to 83 residues: Beta/kappa-theraphotoxin-Cg2a (83 aa).

A signal peptide spans M1–A21. Positions E22 to R53 are excised as a propeptide. 3 disulfides stabilise this stretch: C55–C69, C62–C74, and C68–C78. I82 is subject to Isoleucine amide.

This sequence belongs to the neurotoxin 30 (phrixotoxin) family. As to expression, expressed by the venom gland.

It is found in the secreted. In terms of biological role, this gating-modifier toxin shows an important inhibitory activity on sodium channels. It is very active on Nav1.7/SCN9A (IC(50)~0.6 nM), and also shows activity on Nav1.3/SCN3A (IC(50)=292 nM), Nav1.4/SCN4A (IC(50)=2.2-159 nM), and Nav1.5/SCN5A (IC(50)=2.3-2.9 uM). It has also been shown to inhibit tetrodotoxin (TTX)-resistant (IC(50)=27.6 nM) and TTX-sensitive (IC(50)=30.2 nM) sodium channels in rat dorsal root ganglion neurons. Lower inhibitory activity has also been shown on potassium channels: Kv4.2/KCND2 (IC(50)=604.2 nM), Kv4.3/KCND3 (IC(50)=425.1 nM), and Kv2.1/KCNB1 (IC(50)=14.3 uM). It binds to phospholipid membranes. Like its analog AM-8145, it may act by interacting only with the second voltage-sensor domain of Nav1.7/SCN9A. The chain is Beta/kappa-theraphotoxin-Cg2a from Chilobrachys guangxiensis (Chinese earth tiger tarantula).